The following is a 455-amino-acid chain: Bifunctional protein GlmU (455 aa).

Positions 1 to 227 (MGLSVIILAA…CEEVQGVNDR (227 aa)) are pyrophosphorylase. UDP-N-acetyl-alpha-D-glucosamine is bound by residues 8–11 (LAAG), lysine 22, glutamine 73, 78–79 (GT), 100–102 (YGD), glycine 137, glutamate 152, asparagine 167, and asparagine 225. Aspartate 102 serves as a coordination point for Mg(2+). Mg(2+) is bound at residue asparagine 225. Positions 228-248 (WELTKLERYYQRLMAKKLSLA) are linker. Residues 249-455 (GVTIIDPERF…KGWHRPTKKE (207 aa)) are N-acetyltransferase. UDP-N-acetyl-alpha-D-glucosamine is bound by residues arginine 332 and lysine 350. The active-site Proton acceptor is histidine 362. UDP-N-acetyl-alpha-D-glucosamine contacts are provided by tyrosine 365 and asparagine 376. Acetyl-CoA is bound by residues alanine 379, 385–386 (NY), serine 404, alanine 422, and arginine 439.

The protein in the N-terminal section; belongs to the N-acetylglucosamine-1-phosphate uridyltransferase family. This sequence in the C-terminal section; belongs to the transferase hexapeptide repeat family. In terms of assembly, homotrimer. The cofactor is Mg(2+).

It localises to the cytoplasm. The enzyme catalyses alpha-D-glucosamine 1-phosphate + acetyl-CoA = N-acetyl-alpha-D-glucosamine 1-phosphate + CoA + H(+). It carries out the reaction N-acetyl-alpha-D-glucosamine 1-phosphate + UTP + H(+) = UDP-N-acetyl-alpha-D-glucosamine + diphosphate. Its pathway is nucleotide-sugar biosynthesis; UDP-N-acetyl-alpha-D-glucosamine biosynthesis; N-acetyl-alpha-D-glucosamine 1-phosphate from alpha-D-glucosamine 6-phosphate (route II): step 2/2. It functions in the pathway nucleotide-sugar biosynthesis; UDP-N-acetyl-alpha-D-glucosamine biosynthesis; UDP-N-acetyl-alpha-D-glucosamine from N-acetyl-alpha-D-glucosamine 1-phosphate: step 1/1. It participates in bacterial outer membrane biogenesis; LPS lipid A biosynthesis. Functionally, catalyzes the last two sequential reactions in the de novo biosynthetic pathway for UDP-N-acetylglucosamine (UDP-GlcNAc). The C-terminal domain catalyzes the transfer of acetyl group from acetyl coenzyme A to glucosamine-1-phosphate (GlcN-1-P) to produce N-acetylglucosamine-1-phosphate (GlcNAc-1-P), which is converted into UDP-GlcNAc by the transfer of uridine 5-monophosphate (from uridine 5-triphosphate), a reaction catalyzed by the N-terminal domain. In Coxiella burnetii (strain CbuG_Q212) (Coxiella burnetii (strain Q212)), this protein is Bifunctional protein GlmU.